Consider the following 199-residue polypeptide: 7-methyl-GTP pyrophosphatase (199 aa).

Catalysis depends on aspartate 76, which acts as the Proton acceptor.

This sequence belongs to the Maf family. YceF subfamily. Requires a divalent metal cation as cofactor.

The protein resides in the cytoplasm. It catalyses the reaction N(7)-methyl-GTP + H2O = N(7)-methyl-GMP + diphosphate + H(+). Nucleoside triphosphate pyrophosphatase that hydrolyzes 7-methyl-GTP (m(7)GTP). May have a dual role in cell division arrest and in preventing the incorporation of modified nucleotides into cellular nucleic acids. This is 7-methyl-GTP pyrophosphatase from Brucella abortus biovar 1 (strain 9-941).